The chain runs to 389 residues: Zip homologous protein 3 (389 aa).

The RING-type zinc finger occupies 6–43; it reads CNKCFNRKPPDGFFISSCFHIFCTKCAKADLAVCLICK. A coiled-coil region spans residues 123-164; it reads LAEATAWIQMAEKKLQASEEERVKAEREIEECQAKLKSMTNL. Residues 366 to 389 are disordered; that stretch reads ISSQPGYLAQRKPINGRSFIGPAD.

In terms of assembly, interacts with zhp-4; the interaction is required for their localization along paired chromosomes and stability, and for the formation of chiasma during meiotic recombination. In terms of tissue distribution, expressed througout the gonad (at protein level). Expressed in the germline.

The protein resides in the chromosome. Recruited co-dependently with zhp-4 to the synaptonemal complex between homologous chromosome pairs to regulate the formation and number of crossover events between homologs during meiotic recombination. In the early stages of pachytene, in complex with zhp-4, recruited by the zhp-1-zhp-2 heterodimer to designated crossover sites along the homolog pair to stabilize other pro-crossover factors such as rmh-1, msh-5 and cosa-1. This in turn facilitates crossover and promotes the formation of chiasma in each meiotic nucleus at the late pachytene stage of meiosis. Plays a role in the segregation of homologous chromosomes following the completion of crossovers. Together with him-14 and msh-5 plays a role in the activation of DNA damage-dependent apoptosis at the DNA damage checkpoint in pachytene cells. The chain is Zip homologous protein 3 from Caenorhabditis elegans.